Consider the following 351-residue polypeptide: dTDP-glucose 4,6-dehydratase (351 aa).

Residues 12-13 (FI), 32-35 (DALT), 58-59 (DI), 80-84 (FAAES), and Thr-99 contribute to the NAD(+) site. Residue Ser-84 participates in substrate binding. Residue Thr-133 coordinates substrate. Asp-134 (proton donor) is an active-site residue. Catalysis depends on proton acceptor residues Glu-135 and Tyr-158. Position 158–162 (158–162 (YSASK)) interacts with NAD(+). Asn-187 provides a ligand contact to substrate. Asn-188 provides a ligand contact to NAD(+). Substrate-binding positions include 197–198 (KL), 213–215 (PVY), Arg-222, Asn-257, and 289–293 (DRPGH).

The protein belongs to the NAD(P)-dependent epimerase/dehydratase family. dTDP-glucose dehydratase subfamily. As to quaternary structure, homodimer. It depends on NAD(+) as a cofactor.

The enzyme catalyses dTDP-alpha-D-glucose = dTDP-4-dehydro-6-deoxy-alpha-D-glucose + H2O. It participates in carbohydrate biosynthesis; dTDP-L-rhamnose biosynthesis. The protein operates within bacterial outer membrane biogenesis; LPS O-antigen biosynthesis. Its function is as follows. Catalyzes the dehydration of dTDP-D-glucose to form dTDP-6-deoxy-D-xylo-4-hexulose via a three-step process involving oxidation, dehydration and reduction. This chain is dTDP-glucose 4,6-dehydratase (rfbB), found in Xanthomonas campestris pv. campestris (strain B100).